Consider the following 380-residue polypeptide: Mitogen-activated protein kinase 3 (380 aa).

Position 2 is an N-acetylalanine (Ala-2). The region spanning 43 to 331 (YTQLQYIGEG…VEEALAHPYL (289 aa)) is the Protein kinase domain. ATP-binding positions include 49–57 (IGEGAYGMV) and Lys-72. Asp-167 (proton acceptor) is an active-site residue. Thr-199 is modified (phosphothreonine). Thr-203 carries the phosphothreonine; by MAP2K1 and MAP2K2 modification. Positions 203–205 (TEY) match the TXY motif. Phosphotyrosine; by MAP2K1 and MAP2K2 is present on Tyr-205. Thr-208 is modified (phosphothreonine; by autocatalysis).

This sequence belongs to the protein kinase superfamily. CMGC Ser/Thr protein kinase family. MAP kinase subfamily. As to quaternary structure, binds both upstream activators and downstream substrates in multimolecular complexes. Found in a complex with at least BRAF, HRAS, MAP2K1/MEK1, MAPK3 and RGS14. Interacts with TPR. Interacts with ADAM15, ARRB2, CANX, DAPK1 (via death domain), HSF4, IER3, MAP2K1/MEK1, NISCH, and SGK1. Interacts with MORG1. Interacts with PEA15. Interacts with isoform 1 of MKNK2 and this binding prevents from dephosphorylation and inactivation. Interacts with CDKN2AIP. Interacts with HSF1 (via D domain and preferentially with hyperphosphorylated form); this interaction occurs upon heat shock. Interacts with CAVIN4. Interacts with GIT1; this interaction is necessary for MAPK3 localization to focal adhesions. Interacts with ZNF263. Interacts with EBF4. The cofactor is Mg(2+). Post-translationally, dually phosphorylated on Thr-203 and Tyr-205, which activates the enzyme. Ligand-activated ALK induces tyrosine phosphorylation. Dephosphorylated by PTPRJ at Tyr-205. Autophosphorylated on threonine and tyrosine residues in vitro. Phosphorylated upon FLT3 and KIT signaling. In terms of processing, ubiquitinated by TRIM15 via 'Lys-63'-linked ubiquitination; leading to activation. Deubiquitinated by CYLD.

The protein resides in the cytoplasm. The protein localises to the nucleus. It is found in the membrane. It localises to the caveola. Its subcellular location is the cell junction. The protein resides in the focal adhesion. The enzyme catalyses L-seryl-[protein] + ATP = O-phospho-L-seryl-[protein] + ADP + H(+). The catalysed reaction is L-threonyl-[protein] + ATP = O-phospho-L-threonyl-[protein] + ADP + H(+). Phosphorylated by MAP2K1/MEK1 and MAP2K2/MEK2 on Thr-203 and Tyr-205 in response to external stimuli like insulin or NGF. Both phosphorylations are required for activity. This phosphorylation causes dramatic conformational changes, which enable full activation and interaction of MAPK1/ERK2 with its substrates. Dephosphorylated and inactivated by DUSP3, DUSP6 and DUSP9. Functionally, serine/threonine kinase which acts as an essential component of the MAP kinase signal transduction pathway. MAPK1/ERK2 and MAPK3/ERK1 are the 2 MAPKs which play an important role in the MAPK/ERK cascade. They participate also in a signaling cascade initiated by activated KIT and KITLG/SCF. Depending on the cellular context, the MAPK/ERK cascade mediates diverse biological functions such as cell growth, adhesion, survival and differentiation through the regulation of transcription, translation, cytoskeletal rearrangements. The MAPK/ERK cascade also plays a role in initiation and regulation of meiosis, mitosis, and postmitotic functions in differentiated cells by phosphorylating a number of transcription factors. About 160 substrates have already been discovered for ERKs. Many of these substrates are localized in the nucleus, and seem to participate in the regulation of transcription upon stimulation. However, other substrates are found in the cytosol as well as in other cellular organelles, and those are responsible for processes such as translation, mitosis and apoptosis. Moreover, the MAPK/ERK cascade is also involved in the regulation of the endosomal dynamics, including lysosome processing and endosome cycling through the perinuclear recycling compartment (PNRC); as well as in the fragmentation of the Golgi apparatus during mitosis. The substrates include transcription factors (such as ATF2, BCL6, ELK1, ERF, FOS, HSF4 or SPZ1), cytoskeletal elements (such as CANX, CTTN, GJA1, MAP2, MAPT, PXN, SORBS3 or STMN1), regulators of apoptosis (such as BAD, BTG2, CASP9, DAPK1, IER3, MCL1 or PPARG), regulators of translation (such as EIF4EBP1) and a variety of other signaling-related molecules (like ARHGEF2, DEPTOR, FRS2 or GRB10). Protein kinases (such as RAF1, RPS6KA1/RSK1, RPS6KA3/RSK2, RPS6KA2/RSK3, RPS6KA6/RSK4, SYK, MKNK1/MNK1, MKNK2/MNK2, RPS6KA5/MSK1, RPS6KA4/MSK2, MAPKAPK3 or MAPKAPK5) and phosphatases (such as DUSP1, DUSP4, DUSP6 or DUSP16) are other substrates which enable the propagation the MAPK/ERK signal to additional cytosolic and nuclear targets, thereby extending the specificity of the cascade. In Mus musculus (Mouse), this protein is Mitogen-activated protein kinase 3 (Mapk3).